The sequence spans 640 residues: Threonine--tRNA ligase (640 aa).

A TGS domain is found at 1–61 (MPIITLPNGD…TEDATLQIIT (61 aa)). Residues 242–533 (DHRKIGKALD…LIEHYAGFMP (292 aa)) are catalytic. Residues cysteine 333, histidine 384, and histidine 510 each coordinate Zn(2+).

It belongs to the class-II aminoacyl-tRNA synthetase family. As to quaternary structure, homodimer. It depends on Zn(2+) as a cofactor.

The protein localises to the cytoplasm. It catalyses the reaction tRNA(Thr) + L-threonine + ATP = L-threonyl-tRNA(Thr) + AMP + diphosphate + H(+). In terms of biological role, catalyzes the attachment of threonine to tRNA(Thr) in a two-step reaction: L-threonine is first activated by ATP to form Thr-AMP and then transferred to the acceptor end of tRNA(Thr). Also edits incorrectly charged L-seryl-tRNA(Thr). This Acinetobacter baylyi (strain ATCC 33305 / BD413 / ADP1) protein is Threonine--tRNA ligase.